Consider the following 428-residue polypeptide: CinA-like protein (428 aa).

Belongs to the CinA family.

This Gemmatimonas aurantiaca (strain DSM 14586 / JCM 11422 / NBRC 100505 / T-27) protein is CinA-like protein.